The following is a 943-amino-acid chain: Isoleucine--tRNA ligase (943 aa).

The 'HIGH' region signature appears at 58–68 (PYANGTIHIGH). Glu567 is an L-isoleucyl-5'-AMP binding site. Positions 608 to 612 (KMSKS) match the 'KMSKS' region motif. ATP is bound at residue Lys611. The Zn(2+) site is built by Cys906, Cys909, Cys926, and Cys929.

The protein belongs to the class-I aminoacyl-tRNA synthetase family. IleS type 1 subfamily. As to quaternary structure, monomer. Zn(2+) serves as cofactor.

Its subcellular location is the cytoplasm. The catalysed reaction is tRNA(Ile) + L-isoleucine + ATP = L-isoleucyl-tRNA(Ile) + AMP + diphosphate. Catalyzes the attachment of isoleucine to tRNA(Ile). As IleRS can inadvertently accommodate and process structurally similar amino acids such as valine, to avoid such errors it has two additional distinct tRNA(Ile)-dependent editing activities. One activity is designated as 'pretransfer' editing and involves the hydrolysis of activated Val-AMP. The other activity is designated 'posttransfer' editing and involves deacylation of mischarged Val-tRNA(Ile). In Pseudomonas fluorescens (strain SBW25), this protein is Isoleucine--tRNA ligase.